A 206-amino-acid polypeptide reads, in one-letter code: ATP-dependent Clp protease proteolytic subunit 1 (206 aa).

Ser-103 acts as the Nucleophile in catalysis. His-128 is an active-site residue.

This sequence belongs to the peptidase S14 family. In terms of assembly, fourteen ClpP subunits assemble into 2 heptameric rings which stack back to back to give a disk-like structure with a central cavity, resembling the structure of eukaryotic proteasomes.

The protein resides in the cytoplasm. It carries out the reaction Hydrolysis of proteins to small peptides in the presence of ATP and magnesium. alpha-casein is the usual test substrate. In the absence of ATP, only oligopeptides shorter than five residues are hydrolyzed (such as succinyl-Leu-Tyr-|-NHMec, and Leu-Tyr-Leu-|-Tyr-Trp, in which cleavage of the -Tyr-|-Leu- and -Tyr-|-Trp bonds also occurs).. Cleaves peptides in various proteins in a process that requires ATP hydrolysis. Has a chymotrypsin-like activity. Plays a major role in the degradation of misfolded proteins. The sequence is that of ATP-dependent Clp protease proteolytic subunit 1 from Protochlamydia amoebophila (strain UWE25).